Consider the following 131-residue polypeptide: Holo-[acyl-carrier-protein] synthase (131 aa).

Mg(2+)-binding residues include Asp8 and Glu59.

The protein belongs to the P-Pant transferase superfamily. AcpS family. It depends on Mg(2+) as a cofactor.

It is found in the cytoplasm. It catalyses the reaction apo-[ACP] + CoA = holo-[ACP] + adenosine 3',5'-bisphosphate + H(+). In terms of biological role, transfers the 4'-phosphopantetheine moiety from coenzyme A to a Ser of acyl-carrier-protein. This chain is Holo-[acyl-carrier-protein] synthase, found in Rickettsia rickettsii (strain Iowa).